Consider the following 198-residue polypeptide: E3 ubiquitin-protein ligase rnf152 (198 aa).

Residues 12 to 55 (CQICFNYFSQRRLPKLLHCQHTCCSVCLSQMRLSQREIRCPWCR) form an RING-type zinc finger. Residues 162-182 (TGVCTVLLVAFILIFLLGIVL) form a helical membrane-spanning segment.

Belongs to the RNF152 family.

The protein localises to the lysosome membrane. The enzyme catalyses S-ubiquitinyl-[E2 ubiquitin-conjugating enzyme]-L-cysteine + [acceptor protein]-L-lysine = [E2 ubiquitin-conjugating enzyme]-L-cysteine + N(6)-ubiquitinyl-[acceptor protein]-L-lysine.. Its pathway is protein modification; protein ubiquitination. Its function is as follows. E3 ubiquitin-protein ligase that acts as a negative regulator of mTORC1 signaling by mediating ubiquitination of RagA/RRAGA and RHEB. Catalyzes 'Lys-63'-linked polyubiquitination of RagA/RRAGA in response to amino acid starvation, thereby regulating mTORC1 signaling. Also mediates monoubiquitination of RHEB, promoting its association with the TSC-TBC complex and subsequent inhibition. Also mediates 'Lys-48'-linked polyubiquitination of target proteins and their subsequent targeting to the proteasome for degradation. In Danio rerio (Zebrafish), this protein is E3 ubiquitin-protein ligase rnf152.